Reading from the N-terminus, the 523-residue chain is 2-isopropylmalate synthase (523 aa).

A Pyruvate carboxyltransferase domain is found at 5-267 (VVIFDTTLRD…QTRINHNEIW (263 aa)). Mn(2+) is bound by residues Asp14, His202, His204, and Asn238. Residues 392–523 (RMDYFSVQSG…QNKENNKETV (132 aa)) are regulatory domain.

It belongs to the alpha-IPM synthase/homocitrate synthase family. LeuA type 1 subfamily. Homodimer. Mn(2+) serves as cofactor.

It localises to the cytoplasm. It carries out the reaction 3-methyl-2-oxobutanoate + acetyl-CoA + H2O = (2S)-2-isopropylmalate + CoA + H(+). The protein operates within amino-acid biosynthesis; L-leucine biosynthesis; L-leucine from 3-methyl-2-oxobutanoate: step 1/4. In terms of biological role, catalyzes the condensation of the acetyl group of acetyl-CoA with 3-methyl-2-oxobutanoate (2-ketoisovalerate) to form 3-carboxy-3-hydroxy-4-methylpentanoate (2-isopropylmalate). This chain is 2-isopropylmalate synthase, found in Enterobacter sp. (strain 638).